Consider the following 193-residue polypeptide: Fe/S biogenesis protein NfuA (193 aa).

[4Fe-4S] cluster-binding residues include C151 and C154.

It belongs to the NfuA family. As to quaternary structure, homodimer. [4Fe-4S] cluster serves as cofactor.

Functionally, involved in iron-sulfur cluster biogenesis. Binds a 4Fe-4S cluster, can transfer this cluster to apoproteins, and thereby intervenes in the maturation of Fe/S proteins. Could also act as a scaffold/chaperone for damaged Fe/S proteins. The protein is Fe/S biogenesis protein NfuA of Buchnera aphidicola subsp. Cinara cedri (strain Cc).